We begin with the raw amino-acid sequence, 449 residues long: UDP-N-acetylmuramoylalanine--D-glutamate ligase (449 aa).

107–113 (GSNGKST) contributes to the ATP binding site.

This sequence belongs to the MurCDEF family.

It localises to the cytoplasm. It carries out the reaction UDP-N-acetyl-alpha-D-muramoyl-L-alanine + D-glutamate + ATP = UDP-N-acetyl-alpha-D-muramoyl-L-alanyl-D-glutamate + ADP + phosphate + H(+). It functions in the pathway cell wall biogenesis; peptidoglycan biosynthesis. Cell wall formation. Catalyzes the addition of glutamate to the nucleotide precursor UDP-N-acetylmuramoyl-L-alanine (UMA). This is UDP-N-acetylmuramoylalanine--D-glutamate ligase from Hydrogenovibrio crunogenus (strain DSM 25203 / XCL-2) (Thiomicrospira crunogena).